Reading from the N-terminus, the 147-residue chain is UPF0306 protein YhbP (147 aa).

It belongs to the UPF0306 family.

The protein is UPF0306 protein YhbP of Escherichia coli (strain SMS-3-5 / SECEC).